Consider the following 380-residue polypeptide: Succinyl-diaminopimelate desuccinylase (380 aa).

His69 provides a ligand contact to Zn(2+). Residue Asp71 is part of the active site. Position 102 (Asp102) interacts with Zn(2+). The Proton acceptor role is filled by Glu135. Zn(2+) contacts are provided by Glu136, Glu164, and His353.

It belongs to the peptidase M20A family. DapE subfamily. In terms of assembly, homodimer. It depends on Zn(2+) as a cofactor. Requires Co(2+) as cofactor.

The catalysed reaction is N-succinyl-(2S,6S)-2,6-diaminopimelate + H2O = (2S,6S)-2,6-diaminopimelate + succinate. Its pathway is amino-acid biosynthesis; L-lysine biosynthesis via DAP pathway; LL-2,6-diaminopimelate from (S)-tetrahydrodipicolinate (succinylase route): step 3/3. In terms of biological role, catalyzes the hydrolysis of N-succinyl-L,L-diaminopimelic acid (SDAP), forming succinate and LL-2,6-diaminopimelate (DAP), an intermediate involved in the bacterial biosynthesis of lysine and meso-diaminopimelic acid, an essential component of bacterial cell walls. The sequence is that of Succinyl-diaminopimelate desuccinylase from Cereibacter sphaeroides (strain KD131 / KCTC 12085) (Rhodobacter sphaeroides).